Here is a 268-residue protein sequence, read N- to C-terminus: MTHAFEVYPKVNIFLKILYKEGAYHKLISRMCLVKGQLKDIISVKNAPSFCLKGNFDCPLEENSLFKALQILKNFLKSKKLSHSVIKSLDTLAIEVEKNIPTQAGLGGGSTDAGGLLYHLNQIFDLRLNLEELYTIGSLVGADTNFFISQYKSANATSYGEVIENFEEKPLENRLEIYVPDNIFCSTKAVYQAYKPKTCFYQAKEWLKKPSLECLKTCDRSELNDLLKPALLTHQALKDIESQLGKEWFFSGSGSAFFRLKPTQKGSE.

Residue lysine 10 is part of the active site. Residue 101–111 (PTQAGLGGGST) coordinates ATP. The active site involves aspartate 143.

Belongs to the GHMP kinase family. IspE subfamily.

The enzyme catalyses 4-CDP-2-C-methyl-D-erythritol + ATP = 4-CDP-2-C-methyl-D-erythritol 2-phosphate + ADP + H(+). It functions in the pathway isoprenoid biosynthesis; isopentenyl diphosphate biosynthesis via DXP pathway; isopentenyl diphosphate from 1-deoxy-D-xylulose 5-phosphate: step 3/6. Its function is as follows. Catalyzes the phosphorylation of the position 2 hydroxy group of 4-diphosphocytidyl-2C-methyl-D-erythritol. The chain is 4-diphosphocytidyl-2-C-methyl-D-erythritol kinase from Helicobacter acinonychis (strain Sheeba).